The primary structure comprises 296 residues: MSLRGKDIISISDIKRSDLERIFRVASSRFQGDELKGKIIAMAFFEPSTRTRFSFETATLRLGGNYIGFEAAQSTSLAKGESFSDTIRMLDSYADGIVVRHSLEGAAKLAAELAEAPVINAGDGTKNHPTQAMIDLYTIWKERGNLDNLTYGVLGDLRYGRAAASFLKALNLYSPKKVYLICPEGLRPKQELLDSLKMPWEFSDLKDALPELDVLYVTRVQKERFPDPSEYERVKGSYKVDSSILKDAKEGLMILHPLPRVDEISLDVDSTPYAYYFKQAANGVPVRMALLSEVIP.

Positions 50 and 51 each coordinate carbamoyl phosphate. Position 79 (Lys-79) interacts with L-aspartate. Positions 100, 128, and 131 each coordinate carbamoyl phosphate. 2 residues coordinate L-aspartate: Arg-161 and Arg-219. Residues Leu-258 and Pro-259 each coordinate carbamoyl phosphate.

The protein belongs to the aspartate/ornithine carbamoyltransferase superfamily. ATCase family. As to quaternary structure, heterooligomer of catalytic and regulatory chains.

The enzyme catalyses carbamoyl phosphate + L-aspartate = N-carbamoyl-L-aspartate + phosphate + H(+). The protein operates within pyrimidine metabolism; UMP biosynthesis via de novo pathway; (S)-dihydroorotate from bicarbonate: step 2/3. Its function is as follows. Catalyzes the condensation of carbamoyl phosphate and aspartate to form carbamoyl aspartate and inorganic phosphate, the committed step in the de novo pyrimidine nucleotide biosynthesis pathway. The protein is Aspartate carbamoyltransferase catalytic subunit of Korarchaeum cryptofilum (strain OPF8).